A 480-amino-acid chain; its full sequence is Flap endonuclease 1 (480 aa).

Residues 1 to 106 form an N-domain region; sequence MGIKGLTKFI…SELEKRGEKR (106 aa). Residue D34 coordinates Mg(2+). Residues R47 and R72 each coordinate DNA. Mg(2+) is bound by residues D88, E160, E162, D181, and D183. The tract at residues 124–266 is I-domain; the sequence is EIKKQSGRTV…KTAYNLIKEY (143 aa). Residue E160 participates in DNA binding. DNA is bound by residues G244 and D246. D246 is a binding site for Mg(2+). Positions 349-357 are interaction with PCNA; it reads TQRRLDTFF. The interval 379–461 is disordered; sequence TKGKGKKREI…NIKNENVKED (83 aa). Residues 404–428 are compositionally biased toward basic and acidic residues; the sequence is NVKDEKKNNEKVDELKNKSDENLVK. Over residues 429–438 the composition is skewed to acidic residues; sequence DEEDDQDDYD.

It belongs to the XPG/RAD2 endonuclease family. FEN1 subfamily. Interacts with PCNA. Three molecules of FEN1 bind to one PCNA trimer with each molecule binding to one PCNA monomer. PCNA stimulates the nuclease activity without altering cleavage specificity. The cofactor is Mg(2+). Post-translationally, phosphorylated. Phosphorylation upon DNA damage induces relocalization to the nuclear plasma.

Its subcellular location is the nucleus. It is found in the nucleolus. It localises to the nucleoplasm. The protein localises to the mitochondrion. With respect to regulation, inhibited by monovalent metal ions. Functionally, structure-specific nuclease with 5'-flap endonuclease and 5'-3' exonuclease activities involved in DNA replication and repair. During DNA replication, cleaves the 5'-overhanging flap structure that is generated by displacement synthesis when DNA polymerase encounters the 5'-end of a downstream Okazaki fragment. It enters the flap from the 5'-end and then tracks to cleave the flap base, leaving a nick for ligation. Also involved in the long patch base excision repair (LP-BER) pathway, by cleaving within the apurinic/apyrimidinic (AP) site-terminated flap. Acts as a genome stabilization factor that prevents flaps from equilibrating into structures that lead to duplications and deletions. Also possesses 5'-3' exonuclease activity on nicked or gapped double-stranded DNA, and exhibits RNase H activity. Also involved in replication and repair of rDNA and in repairing mitochondrial DNA. In Plasmodium yoelii yoelii, this protein is Flap endonuclease 1.